A 381-amino-acid polypeptide reads, in one-letter code: Creatine kinase M-type (381 aa).

A Phosphagen kinase N-terminal domain is found at Lys11–Gly98. The segment at Gly99–Gly118 is disordered. In terms of domain architecture, Phosphagen kinase C-terminal spans Tyr125–Leu367. ATP-binding positions include Ser128–Arg132, His191, Arg236, Arg292, Arg320–Val325, and Asp335.

Belongs to the ATP:guanido phosphotransferase family. In terms of assembly, dimer of identical or non-identical chains, which can be either B (brain type) or M (muscle type). With MM being the major form in skeletal muscle and myocardium, MB existing in myocardium, and BB existing in many tissues, especially brain. Predominantly found in skeletal muscle, but not in the heart.

It is found in the cytoplasm. It carries out the reaction creatine + ATP = N-phosphocreatine + ADP + H(+). Functionally, reversibly catalyzes the transfer of phosphate between ATP and various phosphogens (e.g. creatine phosphate). Creatine kinase isoenzymes play a central role in energy transduction in tissues with large, fluctuating energy demands, such as skeletal muscle, heart, brain and spermatozoa. The protein is Creatine kinase M-type of Gallus gallus (Chicken).